Reading from the N-terminus, the 312-residue chain is Ornithine carbamoyltransferase (312 aa).

Carbamoyl phosphate is bound by residues 59–62 (STRT), Q86, R110, and 137–140 (HPCQ). Residues N167, D231, and 235–236 (SM) contribute to the L-ornithine site. Carbamoyl phosphate contacts are provided by C271 and R299.

This sequence belongs to the aspartate/ornithine carbamoyltransferase superfamily. OTCase family.

It is found in the cytoplasm. The catalysed reaction is carbamoyl phosphate + L-ornithine = L-citrulline + phosphate + H(+). It functions in the pathway amino-acid biosynthesis; L-arginine biosynthesis; L-arginine from L-ornithine and carbamoyl phosphate: step 1/3. Functionally, reversibly catalyzes the transfer of the carbamoyl group from carbamoyl phosphate (CP) to the N(epsilon) atom of ornithine (ORN) to produce L-citrulline. The sequence is that of Ornithine carbamoyltransferase from Methanopyrus kandleri (strain AV19 / DSM 6324 / JCM 9639 / NBRC 100938).